A 466-amino-acid chain; its full sequence is Alpha-1,3-mannosyltransferase CMT1 (466 aa).

Positions 1–23 (MFRNTLRTFPRPATPSLPTSSHS) are disordered. Over 1-33 (MFRNTLRTFPRPATPSLPTSSHSPIARASLSKS) the chain is Cytoplasmic. The chain crosses the membrane as a helical; Signal-anchor for type II membrane protein span at residues 34 to 54 (PLFVLSLVLVCIFFLSFLSHP). Topologically, residues 55–466 (DPSARKLQWP…ETRWVQPWLE (412 aa)) are lumenal.

Requires Mg(2+) as cofactor. Mn(2+) serves as cofactor. The cofactor is Co(2+).

The protein localises to the golgi apparatus membrane. It participates in protein modification; protein glycosylation. In terms of biological role, responsible for addition of mannose residues in an alpha-1,3 linkage to a polymannosly precursor. May be involved in synthesis of capsule glucuronoxylomannan. The sequence is that of Alpha-1,3-mannosyltransferase CMT1 from Cryptococcus neoformans var. neoformans serotype D (strain JEC21 / ATCC MYA-565) (Filobasidiella neoformans).